Reading from the N-terminus, the 219-residue chain is 2-C-methyl-D-erythritol 4-phosphate cytidylyltransferase (219 aa).

Belongs to the IspD/TarI cytidylyltransferase family. IspD subfamily.

The enzyme catalyses 2-C-methyl-D-erythritol 4-phosphate + CTP + H(+) = 4-CDP-2-C-methyl-D-erythritol + diphosphate. It functions in the pathway isoprenoid biosynthesis; isopentenyl diphosphate biosynthesis via DXP pathway; isopentenyl diphosphate from 1-deoxy-D-xylulose 5-phosphate: step 2/6. Catalyzes the formation of 4-diphosphocytidyl-2-C-methyl-D-erythritol from CTP and 2-C-methyl-D-erythritol 4-phosphate (MEP). This is 2-C-methyl-D-erythritol 4-phosphate cytidylyltransferase from Chlamydia trachomatis serovar D (strain ATCC VR-885 / DSM 19411 / UW-3/Cx).